Reading from the N-terminus, the 1049-residue chain is Isoleucine--tRNA ligase (1049 aa).

The 'HIGH' region motif lies at proline 48–threonine 58. Positions lysine 596–serine 600 match the 'KMSKS' region motif. An ATP-binding site is contributed by lysine 599.

This sequence belongs to the class-I aminoacyl-tRNA synthetase family. IleS type 2 subfamily. As to quaternary structure, monomer. Requires Zn(2+) as cofactor.

The protein localises to the cytoplasm. It carries out the reaction tRNA(Ile) + L-isoleucine + ATP = L-isoleucyl-tRNA(Ile) + AMP + diphosphate. Functionally, catalyzes the attachment of isoleucine to tRNA(Ile). As IleRS can inadvertently accommodate and process structurally similar amino acids such as valine, to avoid such errors it has two additional distinct tRNA(Ile)-dependent editing activities. One activity is designated as 'pretransfer' editing and involves the hydrolysis of activated Val-AMP. The other activity is designated 'posttransfer' editing and involves deacylation of mischarged Val-tRNA(Ile). The polypeptide is Isoleucine--tRNA ligase (Methanothrix thermoacetophila (strain DSM 6194 / JCM 14653 / NBRC 101360 / PT) (Methanosaeta thermophila)).